A 142-amino-acid polypeptide reads, in one-letter code: Low molecular weight protein-tyrosine-phosphatase Ptp (142 aa).

Cys-10 (nucleophile) is an active-site residue. The active site involves Arg-16. The active-site Proton donor is the Asp-115.

It belongs to the low molecular weight phosphotyrosine protein phosphatase family.

It catalyses the reaction O-phospho-L-tyrosyl-[protein] + H2O = L-tyrosyl-[protein] + phosphate. It participates in glycan metabolism; exopolysaccharide biosynthesis. With respect to regulation, inhibited by ammonium molybdate, sodium orthovanadate, N-ethylmaleimide and iodoacetic acid. In terms of biological role, dephosphorylates ptk. May be involved in the production and the transport of exopolysaccharides. The polypeptide is Low molecular weight protein-tyrosine-phosphatase Ptp (ptp) (Acinetobacter johnsonii).